Reading from the N-terminus, the 237-residue chain is Putative biotin ligase (237 aa).

The BPL/LPL catalytic domain maps to M1–I191.

The protein belongs to the biotin--protein ligase family.

The catalysed reaction is biotin + L-lysyl-[protein] + ATP = N(6)-biotinyl-L-lysyl-[protein] + AMP + diphosphate + H(+). The chain is Putative biotin ligase from Methanocaldococcus jannaschii (strain ATCC 43067 / DSM 2661 / JAL-1 / JCM 10045 / NBRC 100440) (Methanococcus jannaschii).